The primary structure comprises 252 residues: tRNA (guanine-N(1)-)-methyltransferase (252 aa).

Residues Gly-118 and 138–143 (IGDYVL) each bind S-adenosyl-L-methionine.

This sequence belongs to the RNA methyltransferase TrmD family. As to quaternary structure, homodimer.

The protein localises to the cytoplasm. It catalyses the reaction guanosine(37) in tRNA + S-adenosyl-L-methionine = N(1)-methylguanosine(37) in tRNA + S-adenosyl-L-homocysteine + H(+). Its function is as follows. Specifically methylates guanosine-37 in various tRNAs. The sequence is that of tRNA (guanine-N(1)-)-methyltransferase from Pseudomonas aeruginosa (strain UCBPP-PA14).